The sequence spans 143 residues: MAAEGRVQRVASELQKVISLLLRTRIKDAKLASATITEVDLSKDLSYAKIYYTCLAIEDAEYIDKAFEKSKGFFRSSIAKSLSLRIVPNLKFIYDTSLDYGMQMEEKIQQALEADSKIIKQDDKSLQENYKQNDKETKAEKLR.

The tract at residues 123 to 143 is disordered; it reads DKSLQENYKQNDKETKAEKLR.

This sequence belongs to the RbfA family. Monomer. Binds 30S ribosomal subunits, but not 50S ribosomal subunits or 70S ribosomes.

The protein localises to the cytoplasm. In terms of biological role, one of several proteins that assist in the late maturation steps of the functional core of the 30S ribosomal subunit. Associates with free 30S ribosomal subunits (but not with 30S subunits that are part of 70S ribosomes or polysomes). Required for efficient processing of 16S rRNA. May interact with the 5'-terminal helix region of 16S rRNA. The protein is Ribosome-binding factor A of Francisella tularensis subsp. novicida (strain U112).